The sequence spans 420 residues: Ribulose bisphosphate carboxylase large chain (420 aa).

Residues Asn-103 and Thr-153 each coordinate substrate. Lys-155 functions as the Proton acceptor in the catalytic mechanism. Lys-157 contacts substrate. Mg(2+) is bound by residues Lys-181, Asp-183, and Glu-184. Lys-181 is subject to N6-carboxylysine. Catalysis depends on His-274, which acts as the Proton acceptor. Substrate contacts are provided by Arg-275, His-307, and Ser-359.

The protein belongs to the RuBisCO large chain family. Type I subfamily. As to quaternary structure, heterohexadecamer of 8 large chains and 8 small chains; disulfide-linked. The disulfide link is formed within the large subunit homodimers. Mg(2+) serves as cofactor. In terms of processing, the disulfide bond which can form in the large chain dimeric partners within the hexadecamer appears to be associated with oxidative stress and protein turnover.

The protein localises to the plastid. It is found in the chloroplast. It catalyses the reaction 2 (2R)-3-phosphoglycerate + 2 H(+) = D-ribulose 1,5-bisphosphate + CO2 + H2O. It carries out the reaction D-ribulose 1,5-bisphosphate + O2 = 2-phosphoglycolate + (2R)-3-phosphoglycerate + 2 H(+). RuBisCO catalyzes two reactions: the carboxylation of D-ribulose 1,5-bisphosphate, the primary event in carbon dioxide fixation, as well as the oxidative fragmentation of the pentose substrate in the photorespiration process. Both reactions occur simultaneously and in competition at the same active site. This chain is Ribulose bisphosphate carboxylase large chain, found in Anemia mexicana (Mexican fern).